The chain runs to 138 residues: Large ribosomal subunit protein uL16 (138 aa).

The protein belongs to the universal ribosomal protein uL16 family. Part of the 50S ribosomal subunit.

In terms of biological role, binds 23S rRNA and is also seen to make contacts with the A and possibly P site tRNAs. This Neisseria gonorrhoeae (strain ATCC 700825 / FA 1090) protein is Large ribosomal subunit protein uL16.